A 443-amino-acid polypeptide reads, in one-letter code: Trigger factor (443 aa).

One can recognise a PPIase FKBP-type domain in the interval 163–248; sequence GDTAVIDFEG…INEIKAKELP (86 aa).

It belongs to the FKBP-type PPIase family. Tig subfamily.

It is found in the cytoplasm. It carries out the reaction [protein]-peptidylproline (omega=180) = [protein]-peptidylproline (omega=0). Involved in protein export. Acts as a chaperone by maintaining the newly synthesized protein in an open conformation. Functions as a peptidyl-prolyl cis-trans isomerase. This chain is Trigger factor, found in Agathobacter rectalis (strain ATCC 33656 / DSM 3377 / JCM 17463 / KCTC 5835 / VPI 0990) (Eubacterium rectale).